Consider the following 294-residue polypeptide: Protoheme IX farnesyltransferase (294 aa).

The next 9 membrane-spanning stretches (helical) occupy residues 24-44, 48-68, 96-116, 118-138, 145-165, 172-192, 224-244, 245-265, and 268-288; these read VVLL…PGWV, LIAF…AINH, ALWF…LFVN, LTAL…TGYL, NIVI…TAVT, ALLL…ALAI, VLLL…WIYL, LGAL…YFTD, and VVAM…FVFL.

Belongs to the UbiA prenyltransferase family. Protoheme IX farnesyltransferase subfamily.

Its subcellular location is the cell inner membrane. The enzyme catalyses heme b + (2E,6E)-farnesyl diphosphate + H2O = Fe(II)-heme o + diphosphate. Its pathway is porphyrin-containing compound metabolism; heme O biosynthesis; heme O from protoheme: step 1/1. Functionally, converts heme B (protoheme IX) to heme O by substitution of the vinyl group on carbon 2 of heme B porphyrin ring with a hydroxyethyl farnesyl side group. The sequence is that of Protoheme IX farnesyltransferase from Legionella pneumophila (strain Corby).